Reading from the N-terminus, the 270-residue chain is 4-hydroxy-tetrahydrodipicolinate reductase (270 aa).

NAD(+) is bound by residues 11–16 and glutamate 37; that span reads GASGRM. Arginine 38 contributes to the NADP(+) binding site. NAD(+) contacts are provided by residues 101-103 and 125-128; these read GTT and APNM. Histidine 158 serves as the catalytic Proton donor/acceptor. Histidine 159 contributes to the (S)-2,3,4,5-tetrahydrodipicolinate binding site. Lysine 162 (proton donor) is an active-site residue. 168-169 contacts (S)-2,3,4,5-tetrahydrodipicolinate; sequence GT.

The protein belongs to the DapB family.

The protein resides in the cytoplasm. The enzyme catalyses (S)-2,3,4,5-tetrahydrodipicolinate + NAD(+) + H2O = (2S,4S)-4-hydroxy-2,3,4,5-tetrahydrodipicolinate + NADH + H(+). It catalyses the reaction (S)-2,3,4,5-tetrahydrodipicolinate + NADP(+) + H2O = (2S,4S)-4-hydroxy-2,3,4,5-tetrahydrodipicolinate + NADPH + H(+). The protein operates within amino-acid biosynthesis; L-lysine biosynthesis via DAP pathway; (S)-tetrahydrodipicolinate from L-aspartate: step 4/4. Its function is as follows. Catalyzes the conversion of 4-hydroxy-tetrahydrodipicolinate (HTPA) to tetrahydrodipicolinate. The protein is 4-hydroxy-tetrahydrodipicolinate reductase of Shewanella frigidimarina (strain NCIMB 400).